The primary structure comprises 52 residues: Conotoxin-like peptide 2 (52 aa).

An N-terminal signal peptide occupies residues 1-18 (MKFSTILLLVCPTVALSA). 3 disulfide bridges follow: C24–C38, C31–C42, and C37–C49.

The protein localises to the secreted. The sequence is that of Conotoxin-like peptide 2 (CTL-2) from Orgyia pseudotsugata (Douglas-fir tussock moth).